We begin with the raw amino-acid sequence, 461 residues long: Probable metabolite transport protein CsbC (461 aa).

Topologically, residues 1 to 14 (MKKDTRKYMIYFFG) are cytoplasmic. The chain crosses the membrane as a helical span at residues 15-35 (ALGGLLYGYDTGVISGALLFI). The Extracellular segment spans residues 36–38 (NND). Residues 39–59 (IPLTTLTEGLVVSMLLLGAIF) traverse the membrane as a helical segment. At 60-76 (GSALSGTCSDRWGRRKV) the chain is on the cytoplasmic side. The chain crosses the membrane as a helical span at residues 77-97 (VFVLSIIFIIGALACAFSQTI). Residues 98–104 (GMLIASR) are Extracellular-facing. The helical transmembrane segment at 105 to 125 (VILGLAVGGSTALVPVYLSEM) threads the bilayer. Residues 126–139 (APTKIRGTLGTMNN) lie on the Cytoplasmic side of the membrane. Residues 140–160 (LMIVTGILLAYIVNYLFTPFE) form a helical membrane-spanning segment. Over 161-163 (AWR) the chain is Extracellular. A helical membrane pass occupies residues 164–184 (WMVGLAAVPAVLLLIGIAFMP). At 185–241 (ESPRWLVKRGSEEEARRIMNITHDPKDIEMELAEMKQGEAEKKETTLGVLKAKWIRP) the chain is on the cytoplasmic side. Residues 242–262 (MLLIGVGLAIFQQAVGINTVI) traverse the membrane as a helical segment. Residues 263-280 (YYAPTIFTKAGLGTSASA) lie on the Extracellular side of the membrane. A helical transmembrane segment spans residues 281–301 (LGTMGIGILNVIMCITAMILI). The Cytoplasmic portion of the chain corresponds to 302 to 308 (DRVGRKK). Residues 309–329 (LLIWGSVGITLSLAALSGVLL) form a helical membrane-spanning segment. The Extracellular segment spans residues 330-341 (TLGLSASTAWMT). Residues 342–362 (VVFLGVYIVFYQATWGPVVWV) traverse the membrane as a helical segment. Over 363–378 (LMPELFPSKARGAATG) the chain is Cytoplasmic. The chain crosses the membrane as a helical span at residues 379 to 399 (FTTLVLSAANLIVSLVFPLML). At 400–402 (SAM) the chain is on the extracellular side. A helical transmembrane segment spans residues 403-423 (GIAWVFMVFSVICLLSFFFAF). Residues 424–461 (YMVPETKGKSLEEIEASLKKRFKKKKSTQNQVLNERTL) lie on the Cytoplasmic side of the membrane.

It belongs to the major facilitator superfamily. Sugar transporter (TC 2.A.1.1) family.

Its subcellular location is the cell membrane. Its function is as follows. Could serve either a nutritional or an osmotic protection function. In Bacillus subtilis (strain 168), this protein is Probable metabolite transport protein CsbC (csbC).